Consider the following 479-residue polypeptide: Nuclear receptor subfamily 6 group A member 1 (479 aa).

The tract at residues M1–R32 is disordered. Over residues S9–A18 the composition is skewed to gly residues. Positions Q57–E132 form a DNA-binding region, nuclear receptor. The Zn(2+) site is built by C60, C63, C77, C80, C96, C102, C112, and C115. 2 NR C4-type zinc fingers span residues C60–C80 and C96–C120. Disordered regions lie at residues R131–E150 and F162–S198. Over residues E165–H177 the composition is skewed to basic and acidic residues. A sufficient for interaction with UIMC1 region spans residues H172–L252. The segment covering S178 to S198 has biased composition (polar residues). Positions Q248 to E479 constitute an NR LBD domain.

Belongs to the nuclear hormone receptor family. NR6 subfamily. Homodimer. Interacts with UIMC1.

The protein resides in the nucleus. Its function is as follows. Orphan nuclear receptor that binds to a response element containing the sequence 5'-TCAAGGTCA-3'. Acts as a regulator of embryonic stem cell pluripotency by mediating repression of POU5F1/OCT4: binds to the DR0 element within the POU5F1/OCT4 promoter and inhibits POU5F1/OCT4 expression during embryonic stem cell differentiation. Involved in the regulation of gene expression in germ cell development during gametogenesis. The polypeptide is Nuclear receptor subfamily 6 group A member 1 (NR6A1) (Sus scrofa (Pig)).